Reading from the N-terminus, the 526-residue chain is Ubiquitin carboxyl-terminal hydrolase 17-like protein A (526 aa).

Residues 1–21 (MVVALSFPEADPALSSPDAPE) are disordered. The region spanning 51-348 (CGLQNTGNSC…NAYVLFYVQQ (298 aa)) is the USP domain. The Nucleophile role is filled by C60. H307 (proton acceptor) is an active-site residue. Basic residues predominate over residues 374-385 (KKSRRKKHKKKS). Disordered stretches follow at residues 374–394 (KKSR…LGEP) and 465–494 (RSTA…SQGP). The span at 473–486 (DSPDKENQPLHNAD) shows a compositional bias: basic and acidic residues.

It belongs to the peptidase C19 family. Polyubiquitinated; ubiquitination leads to its subsequent degradation. Expressed in hematopoietic progenitor cell lines Ba/F3 and FDCP1. Not detected in brain, lung, liver, kidney, thymus, spleen and bone marrow.

The enzyme catalyses Thiol-dependent hydrolysis of ester, thioester, amide, peptide and isopeptide bonds formed by the C-terminal Gly of ubiquitin (a 76-residue protein attached to proteins as an intracellular targeting signal).. Functionally, deubiquitinating enzyme that removes conjugated ubiquitin from specific proteins to regulate different cellular processes. Has deubiquitinating enzyme activity for DNAH5, suggesting a role in the regulation of DNAH5 degradation by the ubiquitin-proteasome pathway. Has growth-suppressing activity; induces arrest in G1 phase upon controlled expression. The protein is Ubiquitin carboxyl-terminal hydrolase 17-like protein A (Usp17la) of Mus musculus (Mouse).